We begin with the raw amino-acid sequence, 198 residues long: RNA pyrophosphohydrolase (198 aa).

Residues 6–149 enclose the Nudix hydrolase domain; sequence GYRPNVGIVI…KKEVYRKAMK (144 aa). A Nudix box motif is present at residues 38-59; that stretch reads GGINDNESAEQAMYRELFEEVG.

Belongs to the Nudix hydrolase family. RppH subfamily. A divalent metal cation serves as cofactor.

Functionally, accelerates the degradation of transcripts by removing pyrophosphate from the 5'-end of triphosphorylated RNA, leading to a more labile monophosphorylated state that can stimulate subsequent ribonuclease cleavage. The sequence is that of RNA pyrophosphohydrolase from Pasteurella multocida (strain Pm70).